The primary structure comprises 114 residues: uncharacterized protein (114 aa).

Helical transmembrane passes span 58 to 78 (CLLG…FFLL) and 94 to 114 (SISY…FCLA).

It is found in the membrane. This is an uncharacterized protein from Saccharomyces cerevisiae (strain ATCC 204508 / S288c) (Baker's yeast).